Here is a 493-residue protein sequence, read N- to C-terminus: Glutamate synthase [NADPH] small chain (493 aa).

299–313 (GGGDTGADCVATALR) contributes to the NADP(+) binding site.

The protein belongs to the glutamate synthase family. As to quaternary structure, aggregate of 4 catalytic active heterodimers, consisting of a large and a small subunit.

The enzyme catalyses 2 L-glutamate + NADP(+) = L-glutamine + 2-oxoglutarate + NADPH + H(+). It functions in the pathway amino-acid biosynthesis; L-glutamate biosynthesis via GLT pathway; L-glutamate from 2-oxoglutarate and L-glutamine (NADP(+) route): step 1/1. The protein operates within energy metabolism; nitrogen metabolism. In Bacillus subtilis (strain 168), this protein is Glutamate synthase [NADPH] small chain (gltB).